A 145-amino-acid chain; its full sequence is Endoribonuclease YbeY (145 aa).

The Zn(2+) site is built by histidine 109, histidine 113, and histidine 119.

It belongs to the endoribonuclease YbeY family. Zn(2+) serves as cofactor.

It is found in the cytoplasm. Single strand-specific metallo-endoribonuclease involved in late-stage 70S ribosome quality control and in maturation of the 3' terminus of the 16S rRNA. This Ruthia magnifica subsp. Calyptogena magnifica protein is Endoribonuclease YbeY.